The chain runs to 73 residues: UPF0499 protein CHGG_06021 (73 aa).

The signal sequence occupies residues 1-20 (MKSSIHVVLFFLLSLVASMA). 3 cysteine pairs are disulfide-bonded: C41–C55, C48–C60, and C54–C69.

It belongs to the UPF0499 family.

Its subcellular location is the secreted. This chain is UPF0499 protein CHGG_06021, found in Chaetomium globosum (strain ATCC 6205 / CBS 148.51 / DSM 1962 / NBRC 6347 / NRRL 1970) (Soil fungus).